The chain runs to 411 residues: Serine hydroxymethyltransferase (411 aa).

G120–L122 contacts (6S)-5,6,7,8-tetrahydrofolate. Position 225 is an N6-(pyridoxal phosphate)lysine (K225). (6S)-5,6,7,8-tetrahydrofolate is bound at residue S350–F352.

Belongs to the SHMT family. In terms of assembly, homodimer. The cofactor is pyridoxal 5'-phosphate.

The protein localises to the cytoplasm. The enzyme catalyses (6R)-5,10-methylene-5,6,7,8-tetrahydrofolate + glycine + H2O = (6S)-5,6,7,8-tetrahydrofolate + L-serine. The protein operates within one-carbon metabolism; tetrahydrofolate interconversion. It functions in the pathway amino-acid biosynthesis; glycine biosynthesis; glycine from L-serine: step 1/1. In terms of biological role, catalyzes the reversible interconversion of serine and glycine with tetrahydrofolate (THF) serving as the one-carbon carrier. This reaction serves as the major source of one-carbon groups required for the biosynthesis of purines, thymidylate, methionine, and other important biomolecules. Also exhibits THF-independent aldolase activity toward beta-hydroxyamino acids, producing glycine and aldehydes, via a retro-aldol mechanism. In Lactobacillus gasseri (strain ATCC 33323 / DSM 20243 / BCRC 14619 / CIP 102991 / JCM 1131 / KCTC 3163 / NCIMB 11718 / NCTC 13722 / AM63), this protein is Serine hydroxymethyltransferase.